The sequence spans 20 residues: Ranalexin-1Ca (20 aa).

A disulfide bridge connects residues Cys14 and Cys20.

Expressed by the skin glands.

The protein localises to the secreted. In terms of biological role, antibacterial activity against Gram-positive bacterium S.aureus (MIC=17 uM) and Gram-negative bacterium E.coli (MIC=4 uM). Has activity against C.albicans (MIC=14 uM). This is Ranalexin-1Ca from Lithobates clamitans (Green frog).